The following is a 286-amino-acid chain: UPF0725 protein At2g20620 (286 aa).

The tract at residues 1–49 is disordered; it reads MVLETPVCSPIDKESSSDDVQLNKPPKKKRKLDVVYPPRDNTSSSSDVK.

Belongs to the UPF0725 (EMB2204) family.

This chain is UPF0725 protein At2g20620, found in Arabidopsis thaliana (Mouse-ear cress).